We begin with the raw amino-acid sequence, 253 residues long: Imidazole glycerol phosphate synthase subunit HisF (253 aa).

Active-site residues include D11 and D130.

Belongs to the HisA/HisF family. As to quaternary structure, heterodimer of HisH and HisF.

The protein resides in the cytoplasm. The catalysed reaction is 5-[(5-phospho-1-deoxy-D-ribulos-1-ylimino)methylamino]-1-(5-phospho-beta-D-ribosyl)imidazole-4-carboxamide + L-glutamine = D-erythro-1-(imidazol-4-yl)glycerol 3-phosphate + 5-amino-1-(5-phospho-beta-D-ribosyl)imidazole-4-carboxamide + L-glutamate + H(+). It participates in amino-acid biosynthesis; L-histidine biosynthesis; L-histidine from 5-phospho-alpha-D-ribose 1-diphosphate: step 5/9. IGPS catalyzes the conversion of PRFAR and glutamine to IGP, AICAR and glutamate. The HisF subunit catalyzes the cyclization activity that produces IGP and AICAR from PRFAR using the ammonia provided by the HisH subunit. The chain is Imidazole glycerol phosphate synthase subunit HisF from Geobacter metallireducens (strain ATCC 53774 / DSM 7210 / GS-15).